Here is a 530-residue protein sequence, read N- to C-terminus: MLLAALYCLLWSFRTSAGHFPRACASSKSLTEKECCPPWAGDGSPCGRLSGRGSCQDVILSTAPLGPQFPFTGVDDRESWPSIFYNRTCQCFSNFMGFNCGSCKFGFRGPRCTERRLLVRRNIFDLSVPEKNKFLAYLTLAKHTTSPDYVIPTGTYGQMNHGTTPLFNDVSVYDLFVWMHYYVSRDTLLGDSEVWRDIDFAHEAPGFLPWHRLFLLLWEQEIQKLTGDENFTIPYWDWRDAENCDVCTDEYMGGRNPANPNLLSPASFFSSWQIVCSRLEEYNSRQALCNGTSEGPLLRNPGNHDKARTPRLPSSADVEFCLSLTQYESGSMDKAANFSFRNTLEGFADPVTGIADASQSSMHNALHIYMNGTMSQVPGSANDPIFLLHHAFVDSIFEQWLRKYHPLQDVYPEANAPIGHNRESYMVPFIPLYRNGDFFISSKDXGYDYSYLQDSEPDIFQDYIKPYLEQAQRIWPWLIGAAVVGSVLTAVLGGLTSLLCRRKRNQLPEEKQPLLMEKEDYHNLMYQSHL.

A signal peptide spans 1–17; sequence MLLAALYCLLWSFRTSA. The Lumenal, melanosome portion of the chain corresponds to 19–473; sequence HFPRACASSK…IKPYLEQAQR (455 aa). N-linked (GlcNAc...) asparagine glycosylation occurs at Asn-86. The Cu cation site is built by His-180, His-202, and His-211. 3 N-linked (GlcNAc...) asparagine glycosylation sites follow: Asn-230, Asn-290, and Asn-337. Cu cation is bound by residues His-363 and His-367. Residue Asn-371 is glycosylated (N-linked (GlcNAc...) asparagine). A Cu cation-binding site is contributed by His-390. Residues 474 to 494 traverse the membrane as a helical segment; the sequence is IWPWLIGAAVVGSVLTAVLGG. The Cytoplasmic segment spans residues 495–530; sequence LTSLLCRRKRNQLPEEKQPLLMEKEDYHNLMYQSHL.

The protein belongs to the tyrosinase family. In terms of assembly, forms an OPN3-dependent complex with DCT in response to blue light in melanocytes. Cu(2+) is required as a cofactor. Post-translationally, glycosylated.

The protein resides in the melanosome membrane. It is found in the melanosome. The catalysed reaction is 2 L-dopa + O2 = 2 L-dopaquinone + 2 H2O. It carries out the reaction L-tyrosine + O2 = L-dopaquinone + H2O. It catalyses the reaction 2 5,6-dihydroxyindole-2-carboxylate + O2 = 2 indole-5,6-quinone-2-carboxylate + 2 H2O. This is a copper-containing oxidase that functions in the formation of pigments such as melanins and other polyphenolic compounds. Catalyzes the initial and rate limiting step in the cascade of reactions leading to melanin production from tyrosine. In addition to hydroxylating tyrosine to DOPA (3,4-dihydroxyphenylalanine), also catalyzes the oxidation of DOPA to DOPA-quinone, and possibly the oxidation of DHI (5,6-dihydroxyindole) to indole-5,6 quinone. The sequence is that of Tyrosinase (TYR) from Bos taurus (Bovine).